Reading from the N-terminus, the 212-residue chain is Agglutinin isolectin 1 (212 aa).

The N-terminal stretch at 1-26 (MKMMSTRALALGAAAVLAFAAATAQA) is a signal peptide. Position 27 is a pyrrolidone carboxylic acid (Gln-27). Chitin-binding type-1 domains lie at 27 to 68 (QRCG…ACWT), 69 to 111 (SKRC…PCRA), 112 to 154 (DIKC…ACST), and 155 to 197 (DKPC…GCDG). Cystine bridges form between Cys-29–Cys-44, Cys-38–Cys-50, Cys-43–Cys-57, Cys-61–Cys-66, Cys-72–Cys-87, Cys-81–Cys-93, Cys-86–Cys-100, Cys-104–Cys-109, Cys-115–Cys-130, Cys-124–Cys-136, Cys-129–Cys-143, Cys-147–Cys-152, Cys-158–Cys-173, Cys-167–Cys-179, Cys-172–Cys-186, and Cys-190–Cys-195. 36–38 (MEC) provides a ligand contact to substrate. 88-99 (SQYGYCGFGAEY) is a substrate binding site. Residue 140–141 (SE) coordinates substrate. A propeptide spanning residues 198 to 212 (VFAEAITANSTLLQE) is cleaved from the precursor.

In terms of assembly, homodimer, u-shaped.

N-acetyl-D-glucosamine / N-acetyl-D-neuraminic acid binding lectin. This Triticum aestivum (Wheat) protein is Agglutinin isolectin 1.